Here is a 182-residue protein sequence, read N- to C-terminus: Probable nicotinate-nucleotide adenylyltransferase (182 aa).

The protein belongs to the NadD family.

The enzyme catalyses nicotinate beta-D-ribonucleotide + ATP + H(+) = deamido-NAD(+) + diphosphate. Its pathway is cofactor biosynthesis; NAD(+) biosynthesis; deamido-NAD(+) from nicotinate D-ribonucleotide: step 1/1. Functionally, catalyzes the reversible adenylation of nicotinate mononucleotide (NaMN) to nicotinic acid adenine dinucleotide (NaAD). In Sulfurimonas denitrificans (strain ATCC 33889 / DSM 1251) (Thiomicrospira denitrificans (strain ATCC 33889 / DSM 1251)), this protein is Probable nicotinate-nucleotide adenylyltransferase.